The chain runs to 234 residues: Adenosine 5'-phosphosulfate reductase (234 aa).

The [4Fe-4S] cluster site is built by cysteine 120, cysteine 121, cysteine 203, and cysteine 206. The Nucleophile; cysteine thiosulfonate intermediate role is filled by cysteine 229.

It belongs to the PAPS reductase family. CysH subfamily. Requires [4Fe-4S] cluster as cofactor.

It localises to the cytoplasm. It catalyses the reaction [thioredoxin]-disulfide + sulfite + AMP + 2 H(+) = adenosine 5'-phosphosulfate + [thioredoxin]-dithiol. The protein operates within sulfur metabolism; hydrogen sulfide biosynthesis; sulfite from sulfate. Its function is as follows. Catalyzes the formation of sulfite from adenosine 5'-phosphosulfate (APS) using thioredoxin as an electron donor. In Bacillus cereus (strain 03BB102), this protein is Adenosine 5'-phosphosulfate reductase.